A 194-amino-acid polypeptide reads, in one-letter code: 7-methyl-GTP pyrophosphatase (194 aa).

Asp67 acts as the Proton acceptor in catalysis.

Belongs to the Maf family. YceF subfamily. Requires a divalent metal cation as cofactor.

Its subcellular location is the cytoplasm. The catalysed reaction is N(7)-methyl-GTP + H2O = N(7)-methyl-GMP + diphosphate + H(+). Nucleoside triphosphate pyrophosphatase that hydrolyzes 7-methyl-GTP (m(7)GTP). May have a dual role in cell division arrest and in preventing the incorporation of modified nucleotides into cellular nucleic acids. In Pseudoalteromonas atlantica (strain T6c / ATCC BAA-1087), this protein is 7-methyl-GTP pyrophosphatase.